The chain runs to 678 residues: MENHLPNIFYFPNCVTAFPYRYTQKELDDMKPVDRERFKYAVFPLIKHRWCRAYVVRDNHTFKLNVETSKRLRRVAYPTLVPLVGVNAALREYVMEDGTKISFECYSYLICKRTTSLHDVDDSTIRGLVEGGNQLNIFTNSVGSVTNTVGIFGNPNPFAKVPLKSLHPSMQCKIFTSWARRVPVVLTGDTGVGKTSQVPKLLLWFNYLFGGFTDLSTLTFEVQEKPIVLSLPRVALVKLHSETLLTSLGFEEIHGSPVSLKFGNMQERFVNTRFSRYGIVFSTHKITLNTLFKYSTVILDEVHEHDQTGDIIIAVCRKYIRKLDSLFLMTATLEDDRRRIEEFFAESVFVHIPGGTLFSISEAYVKNSNDPLNRFMYIEEEKRNLANAIKTYTPPKQSSGIVFVSTVSQCEAYKQYLSERLPYKFYIIHGKVQNINDVLSDIYDNDGVSIIISTPYLESSVTVRNATHVYDTGRVYIPSPYGGCESFISKSMRDQRKGRVGRVNPGMYVYFYNVSELRPIKRIDFEFLHNYVLYAKVFDLQLPEDLFVKPTNVTRLHDVIEYIRSFDISDDVWTRLLSSYYIHILEYAKVYARGGSGALALDSFERTGNLTDDALDAIKSLNMRAKILSHKKASAHTYALRCKLLFGVYAGKVFTVYHKRPLTGYITMIAEHSFIPDY.

Residues 175–351 (FTSWARRVPV…EFFAESVFVH (177 aa)) enclose the Helicase ATP-binding domain. 188 to 195 (GDTGVGKT) contributes to the ATP binding site. The DEXH box signature appears at 300–303 (DEVH). Residues 371–546 (PLNRFMYIEE…VFDLQLPEDL (176 aa)) enclose the Helicase C-terminal domain.

Belongs to the DEAD box helicase family. DEAH subfamily. In terms of assembly, monomer.

The protein resides in the virion. It catalyses the reaction ATP + H2O = ADP + phosphate + H(+). Functionally, NTP-dependent helicase that catalyzes unidirectional unwinding of 3'tailed duplex RNAs and plays an important role during transcription of early mRNAs, presumably by preventing R-loop formation behind the elongating RNA polymerase. Might also play a role in the export of newly synthesized mRNA chains out of the core into the cytoplasm. Required for replication and propagation of viral particles. The polypeptide is RNA helicase NPH-II (OPG084) (Oryctolagus cuniculus (Rabbit)).